The sequence spans 329 residues: Tagatose 1,6-diphosphate aldolase 2 (329 aa).

Belongs to the aldolase LacD family.

It catalyses the reaction D-tagatofuranose 1,6-bisphosphate = D-glyceraldehyde 3-phosphate + dihydroxyacetone phosphate. It participates in carbohydrate metabolism; D-tagatose 6-phosphate degradation; D-glyceraldehyde 3-phosphate and glycerone phosphate from D-tagatose 6-phosphate: step 2/2. The protein is Tagatose 1,6-diphosphate aldolase 2 (lacD2) of Streptococcus mutans serotype c (strain ATCC 700610 / UA159).